The sequence spans 125 residues: Holo-[acyl-carrier-protein] synthase (125 aa).

Aspartate 8 and glutamate 57 together coordinate Mg(2+).

This sequence belongs to the P-Pant transferase superfamily. AcpS family. Requires Mg(2+) as cofactor.

It localises to the cytoplasm. It carries out the reaction apo-[ACP] + CoA = holo-[ACP] + adenosine 3',5'-bisphosphate + H(+). In terms of biological role, transfers the 4'-phosphopantetheine moiety from coenzyme A to a Ser of acyl-carrier-protein. This Halothermothrix orenii (strain H 168 / OCM 544 / DSM 9562) protein is Holo-[acyl-carrier-protein] synthase.